A 768-amino-acid chain; its full sequence is Polyadenylate-binding protein, cytoplasmic and nuclear (768 aa).

Residues 1 to 11 (MSAETATNPPV) show a composition bias toward polar residues. A disordered region spans residues 1 to 52 (MSAETATNPPVDTTPGAAPESATNGSNANVAADTTAGEASQTTSSTTPTAQP). The segment covering 39 to 52 (ASQTTSSTTPTAQP) has biased composition (low complexity). 4 consecutive RRM domains span residues 55-133 (ASLY…WSQR), 143-220 (GNVF…HHIA), 236-314 (TNVY…RAQK), and 340-470 (VNLY…LAQR). 3 disordered regions span residues 374 to 428 (DFAP…EKKP), 633 to 662 (QQGM…NASP), and 739 to 768 (KNKG…ETKS). Positions 637 to 646 (GRPGQAGRGQ) are enriched in gly residues. A PABC domain is found at 662–739 (PNGLTLQVLN…ALTVYDEYVK (78 aa)). The span at 753-768 (NKSKDASQETAEETKS) shows a compositional bias: basic and acidic residues.

The protein belongs to the polyadenylate-binding protein type-1 family.

It is found in the cytoplasm. Its subcellular location is the nucleus. Functionally, binds the poly(A) tail of mRNA. Appears to be an important mediator of the multiple roles of the poly(A) tail in mRNA biogenesis, stability and translation. In the nucleus, involved in both mRNA cleavage and polyadenylation. Is also required for efficient mRNA export to the cytoplasm. Acts in concert with a poly(A)-specific nuclease (PAN) to affect poly(A) tail shortening, which may occur concomitantly with either nucleocytoplasmic mRNA transport or translational initiation. In the cytoplasm, stimulates translation initiation and regulates mRNA decay through translation termination-coupled poly(A) shortening, probably mediated by PAN. The sequence is that of Polyadenylate-binding protein, cytoplasmic and nuclear (PAB1) from Coccidioides immitis (strain RS) (Valley fever fungus).